The primary structure comprises 308 residues: Phosphoribosylaminoimidazole-succinocarboxamide synthase (308 aa).

This sequence belongs to the SAICAR synthetase family.

It carries out the reaction 5-amino-1-(5-phospho-D-ribosyl)imidazole-4-carboxylate + L-aspartate + ATP = (2S)-2-[5-amino-1-(5-phospho-beta-D-ribosyl)imidazole-4-carboxamido]succinate + ADP + phosphate + 2 H(+). It functions in the pathway purine metabolism; IMP biosynthesis via de novo pathway; 5-amino-1-(5-phospho-D-ribosyl)imidazole-4-carboxamide from 5-amino-1-(5-phospho-D-ribosyl)imidazole-4-carboxylate: step 1/2. The chain is Phosphoribosylaminoimidazole-succinocarboxamide synthase from Xylella fastidiosa (strain Temecula1 / ATCC 700964).